The chain runs to 748 residues: Cysteine--tRNA ligase, cytoplasmic (748 aa).

Residues 1 to 25 (MAGSSGQQGKGRRVQPQWSPPAGTQ) form a disordered region. An N-acetylalanine modification is found at Ala2. Ser19 carries the phosphoserine modification. Cys55 contributes to the Zn(2+) binding site. Residue Gly56 coordinates L-cysteine. Positions 57-67 (PTVYDASHMGH) match the 'HIGH' region motif. Thr96 serves as a coordination point for L-cysteine. The short motif at 101–104 (KIIK) is the 'KIIK' region element. 2 positions are modified to phosphoserine: Ser305 and Ser307. Positions 348, 373, and 377 each coordinate Zn(2+). His373 provides a ligand contact to L-cysteine. The short motif at 406 to 410 (KMSKS) is the 'KMSKS' region element. Lys409 contacts ATP. Composition is skewed to basic and acidic residues over residues 654 to 679 (KRQV…EAAK) and 700 to 717 (KFDE…KELS). Disordered regions lie at residues 654-686 (KRQV…MKIP) and 700-721 (KFDE…KGQA). Ser746 is modified (phosphoserine).

In terms of assembly, homodimer. Zn(2+) serves as cofactor.

The protein resides in the cytoplasm. It catalyses the reaction tRNA(Cys) + L-cysteine + ATP = L-cysteinyl-tRNA(Cys) + AMP + diphosphate. Catalyzes the ATP-dependent ligation of cysteine to tRNA(Cys). The polypeptide is Cysteine--tRNA ligase, cytoplasmic (CARS1) (Macaca fascicularis (Crab-eating macaque)).